Here is a 147-residue protein sequence, read N- to C-terminus: Globin, major monomeric component (147 aa).

Positions 1–146 (GLSAAQRQVI…ISGALISGLQ (146 aa)) constitute a Globin domain. His90 lines the heme b pocket.

Belongs to the globin family. In terms of assembly, monomer.

This is Globin, major monomeric component from Glycera dibranchiata (Bloodworm).